The primary structure comprises 378 residues: Septin-5 (378 aa).

One can recognise a Septin-type G domain in the interval 50-323; sequence KGFDFTLMVA…ENYRAHCIQQ (274 aa). The tract at residues 60–67 is G1 motif; the sequence is GESGLGKS. GTP contacts are provided by residues 60–67, threonine 94, and glycine 120; that span reads GESGLGKS. Residues 117-120 form a G3 motif region; the sequence is DTPG. Arginine 177 carries the post-translational modification Omega-N-methylarginine. Positions 198-201 are G4 motif; that stretch reads AKAD. Residue 199–207 participates in GTP binding; the sequence is KADCLVPSE. Serine 234 carries the phosphoserine modification. Positions 257 and 272 each coordinate GTP. Serine 336 carries the phosphoserine modification. Threonine 345 carries the phosphothreonine modification. Residues 347–378 are a coiled coil; sequence DAETEKLIRMKDEELRRMQEMLQRMKQQMQDQ.

The protein belongs to the TRAFAC class TrmE-Era-EngA-EngB-Septin-like GTPase superfamily. Septin GTPase family. As to quaternary structure, septins polymerize into heterooligomeric protein complexes that form filaments, and can associate with cellular membranes, actin filaments and microtubules. GTPase activity is required for filament formation. Interacts with SEPTIN2 and SEPTIN5. In platelets, associated with a complex containing STX4. Interacts with PRKN; this interaction leads to SEPTIN5 ubiquitination and degradation. Interacts with DYRK1A. Interacts with STX1A; in the cerebellar cortex. Phosphorylated by DYRK1A.

The protein localises to the cytoplasm. The protein resides in the cytoskeleton. Filament-forming cytoskeletal GTPase. May play a role in cytokinesis (Potential). May play a role in platelet secretion. The polypeptide is Septin-5 (Macaca fascicularis (Crab-eating macaque)).